The following is a 932-amino-acid chain: MTNERKEVSEAPVNFGANLGLMLDLYDDFLQDPSSVPEDLQVLFSTIKNDDSIVPALKSTSSQNSDGTIKRVMRLIDNIRQYGHLKADIYPVNPPKRKHVPKLEIEDFDLDQQTLEGISAGIVSDHFADIYDNAYEAILRMEKRYKGPIAFEYTHINNNTERGWLKRRIETPYKVTLNNNEKRALFKQLAYVEGFEKYLHKNFVGAKRFSIEGVDALVPMLQRTITIAAKEGIKNIQIGMAHRGRLNVLTHVLEKPYEMMISEFMHTDPMKFLPEDGSLQLTAGWTGDVKYHLGGIKTTDSYGTMQRIALANNPSHLEIVAPVVEGRTRAAQDDTQRAGAPTTDHHKAMPIIIHGDAAYPGQGINFETMNLGNLKGYSTGGSLHIITNNRIGFTTEPIDARSTTYSTDVAKGYDVPIFHVNADDVEATIEAIDIAMEFRKEFHKDVVIDLVGYRRFGHNEMDEPSITNPVPYQNIRKHDSVEYVFGKKLVNEGVISEDEMHSFIEQVQKELRQAHDKINKADKMDNPDMEKPAELALPLQADEQSFTFDHLKEINDALLTYPDGFNILKKLNKVLEKRHEPFNKEDGLVDWAQAEQLAFATILQDGTPIRLTGQDSERGTFSHRHAVLHDEQTGETYTPLHHVPDQKATFDIHNSPLSEAAVVGFEYGYNVENKKSFNIWEAQYGDFANMSQMIFDNFLFSSRSKWGERSGLTLFLPHAYEGQGPEHSSARLERFLQLAAENNCTVVNLSSSSNYFHLLRAQAASLDSEQMRPLVVMSPKSLLRNKTVAKPIDEFTSGGFEPILTESYQADKVTKVILATGKMFIDLKEALAKNPDESVLLVAIERLYPFPEEEIEALLAQLPNLEEVSWVQEEPKNQGAWLYVYPYVKVLVADKYDLSYHGRIQRAAPAEGDGEIHKLVQNKIIENALKNN.

Belongs to the alpha-ketoglutarate dehydrogenase family. In terms of assembly, homodimer. Part of the 2-oxoglutarate dehydrogenase (OGDH) complex composed of E1 (2-oxoglutarate dehydrogenase), E2 (dihydrolipoamide succinyltransferase) and E3 (dihydrolipoamide dehydrogenase); the complex contains multiple copies of the three enzymatic components (E1, E2 and E3). It depends on thiamine diphosphate as a cofactor.

It carries out the reaction N(6)-[(R)-lipoyl]-L-lysyl-[protein] + 2-oxoglutarate + H(+) = N(6)-[(R)-S(8)-succinyldihydrolipoyl]-L-lysyl-[protein] + CO2. Its function is as follows. E1 component of the 2-oxoglutarate dehydrogenase (OGDH) complex which catalyzes the decarboxylation of 2-oxoglutarate, the first step in the conversion of 2-oxoglutarate to succinyl-CoA and CO(2). This Staphylococcus aureus (strain JH9) protein is 2-oxoglutarate dehydrogenase E1 component.